A 74-amino-acid chain; its full sequence is Protein RALF-like 25 (74 aa).

A signal peptide spans 1–22 (MKTFMIILLVICSILIVGRVEA). 2 disulfide bridges follow: Cys35–Cys44 and Cys62–Cys68.

Belongs to the plant rapid alkalinization factor (RALF) family.

Its subcellular location is the secreted. In terms of biological role, cell signaling peptide that may regulate plant stress, growth, and development. Mediates a rapid alkalinization of extracellular space by mediating a transient increase in the cytoplasmic Ca(2+) concentration leading to a calcium-dependent signaling events through a cell surface receptor and a concomitant activation of some intracellular mitogen-activated protein kinases. The protein is Protein RALF-like 25 (RALFL25) of Arabidopsis thaliana (Mouse-ear cress).